We begin with the raw amino-acid sequence, 89 residues long: Small ribosomal subunit protein uS15 (89 aa).

The protein belongs to the universal ribosomal protein uS15 family. As to quaternary structure, part of the 30S ribosomal subunit. Forms a bridge to the 50S subunit in the 70S ribosome, contacting the 23S rRNA.

One of the primary rRNA binding proteins, it binds directly to 16S rRNA where it helps nucleate assembly of the platform of the 30S subunit by binding and bridging several RNA helices of the 16S rRNA. In terms of biological role, forms an intersubunit bridge (bridge B4) with the 23S rRNA of the 50S subunit in the ribosome. The chain is Small ribosomal subunit protein uS15 from Oleidesulfovibrio alaskensis (strain ATCC BAA-1058 / DSM 17464 / G20) (Desulfovibrio alaskensis).